Here is a 57-residue protein sequence, read N- to C-terminus: Small ribosomal subunit protein bS21 (57 aa).

It belongs to the bacterial ribosomal protein bS21 family.

The chain is Small ribosomal subunit protein bS21 from Bacillus cytotoxicus (strain DSM 22905 / CIP 110041 / 391-98 / NVH 391-98).